The sequence spans 752 residues: Kaurene synthase like 2, chloroplastic (752 aa).

Residues 1–28 constitute a chloroplast transit peptide; the sequence is MSLLLSNSALVGPKFRSSRISHASASLD. Mg(2+) contacts are provided by aspartate 538, aspartate 542, asparagine 682, and glutamate 690. The DDXXD motif signature appears at 538–542; it reads DDLFD.

This sequence belongs to the terpene synthase family. Mg(2+) is required as a cofactor. Highly expressed in leaves.

It is found in the plastid. The protein localises to the chloroplast. The protein operates within secondary metabolite biosynthesis; terpenoid biosynthesis. Involved in the biosynthesis of ent-kaurene diterpenoids natural products such as oridonin, miltiradiene, eriocalyxin B and nezukol, known to exhibit antitumor, anti-inflammatory and antibacterial activities. Catalyzes the conversion of ent-copalyl diphosphate (ent-CPP) to ent-isopimaradiene like compounds. The polypeptide is Kaurene synthase like 2, chloroplastic (Isodon rubescens (Rabdosia rubescens)).